Here is a 273-residue protein sequence, read N- to C-terminus: Large ribosomal subunit protein uL2cz/uL2cy (273 aa).

Disordered stretches follow at residues 1–22 and 223–254; these read MAIH…DSQV and MNPV…PALG.

Belongs to the universal ribosomal protein uL2 family. Part of the 50S ribosomal subunit.

It localises to the plastid. Its subcellular location is the chloroplast. This is Large ribosomal subunit protein uL2cz/uL2cy (rpl2-A) from Drimys granadensis.